The chain runs to 400 residues: MIIKPRIRGFICTTTHPVGCEQNVKEQIALTKAQGPIANAPKRVLVVGSSSGYGLSSRITAAFGGGASTIGVFFEKAGTEKKPGTAGWYNSAAFDKFAKEEGLYSKSLNGDAFSNEAKQKTIDLIKEDLGQIDMVVYSLASPVRKMPETGEVIRSSLKPIGETYTATAVDTNKDAIIEASVEPATEQEIKDTVTVMGGEDWELWINALSEAGVLADGCKTVAYSYIGTELTWPIYWDGALGQAKMDLDRAATALNEKLSATGGTANVAVLKSVVTQASSAIPVMPLYIAMVFKKMREEGVHEGCQEQILRMFSQRLYKADGSAAEVDEKNRLRLDDWELREDIQQHCRDLWPQVTTENLKDLTDYVEYKEEFLKLFGFGVDGVDYDADVNPEVNFDVADI.

Residues 48–53 (GSSSGY), 74–75 (FE), 111–112 (DA), and 139–140 (LA) each bind NAD(+). Tyr225 is a binding site for substrate. Tyr235 serves as the catalytic Proton donor. NAD(+) contacts are provided by residues Lys244 and 273–275 (VVT).

Belongs to the TER reductase family. Monomer.

It carries out the reaction a 2,3-saturated acyl-[ACP] + NAD(+) = a (2E)-enoyl-[ACP] + NADH + H(+). It participates in lipid metabolism; fatty acid biosynthesis. Involved in the final reduction of the elongation cycle of fatty acid synthesis (FAS II). Catalyzes the reduction of a carbon-carbon double bond in an enoyl moiety that is covalently linked to an acyl carrier protein (ACP). The polypeptide is Enoyl-[acyl-carrier-protein] reductase [NADH] (Aliivibrio fischeri (strain ATCC 700601 / ES114) (Vibrio fischeri)).